We begin with the raw amino-acid sequence, 257 residues long: Urease accessory protein UreD (257 aa).

It belongs to the UreD family. UreD, UreF and UreG form a complex that acts as a GTP-hydrolysis-dependent molecular chaperone, activating the urease apoprotein by helping to assemble the nickel containing metallocenter of UreC. The UreE protein probably delivers the nickel.

It localises to the cytoplasm. In terms of biological role, required for maturation of urease via the functional incorporation of the urease nickel metallocenter. This is Urease accessory protein UreD from Ruegeria pomeroyi (strain ATCC 700808 / DSM 15171 / DSS-3) (Silicibacter pomeroyi).